The sequence spans 495 residues: ATP synthase subunit beta, chloroplastic (495 aa).

ATP is bound at residue glycine 172–threonine 179.

The protein belongs to the ATPase alpha/beta chains family. In terms of assembly, F-type ATPases have 2 components, CF(1) - the catalytic core - and CF(0) - the membrane proton channel. CF(1) has five subunits: alpha(3), beta(3), gamma(1), delta(1), epsilon(1). CF(0) has four main subunits: a(1), b(1), b'(1) and c(9-12).

It localises to the plastid. It is found in the chloroplast thylakoid membrane. It catalyses the reaction ATP + H2O + 4 H(+)(in) = ADP + phosphate + 5 H(+)(out). Produces ATP from ADP in the presence of a proton gradient across the membrane. The catalytic sites are hosted primarily by the beta subunits. The sequence is that of ATP synthase subunit beta, chloroplastic from Convallaria majalis (Lily of the valley).